Here is a 150-residue protein sequence, read N- to C-terminus: UPF0735 ACT domain-containing protein Csac_0995 (150 aa).

Positions 72–147 (TLALVLQDVP…GVKKIEILGR (76 aa)) constitute an ACT domain.

Belongs to the UPF0735 family.

The polypeptide is UPF0735 ACT domain-containing protein Csac_0995 (Caldicellulosiruptor saccharolyticus (strain ATCC 43494 / DSM 8903 / Tp8T 6331)).